The chain runs to 243 residues: MLIIPAIDLKDGKCVRLKQGRMEDDTVFSDDPVATAQHWVNEGARRLHLVDLNGAFAGTPIHKPVVEAIAKAQPELPIQIGGGIRSLETIEHYLEAGVTFVIIGTKAVQEPEFVEEACKRFAGHIIVGIDAMNGMVATDGWANVTDVKATDLAKRFADAGVSSIVYTDIARDGMMQGVNVEQTVNLAQYSGLPVIASGGVTNLDDVRNLKGQPGILGAITGRAIYEGTLNLREAQLLLDENRL.

Catalysis depends on aspartate 8, which acts as the Proton acceptor. The Proton donor role is filled by aspartate 130.

Belongs to the HisA/HisF family.

The protein resides in the cytoplasm. It catalyses the reaction 1-(5-phospho-beta-D-ribosyl)-5-[(5-phospho-beta-D-ribosylamino)methylideneamino]imidazole-4-carboxamide = 5-[(5-phospho-1-deoxy-D-ribulos-1-ylimino)methylamino]-1-(5-phospho-beta-D-ribosyl)imidazole-4-carboxamide. Its pathway is amino-acid biosynthesis; L-histidine biosynthesis; L-histidine from 5-phospho-alpha-D-ribose 1-diphosphate: step 4/9. In Acinetobacter baumannii (strain AB307-0294), this protein is 1-(5-phosphoribosyl)-5-[(5-phosphoribosylamino)methylideneamino] imidazole-4-carboxamide isomerase.